The primary structure comprises 1097 residues: Chitin synthase 2 (1097 aa).

The segment at 1–46 is disordered; it reads MAGYGHSTAGGFGSGSGSGPPGPQYMLPQYDEGDDPDADATPAGQG. The Extracellular segment spans residues 1–748; sequence MAGYGHSTAG…HVEFLYHLLQ (748 aa). The segment covering 8–19 has biased composition (gly residues); the sequence is TAGGFGSGSGSG. Asparagine 55 carries an N-linked (GlcNAc...) asparagine glycan. 2 disordered regions span residues 148-217 and 259-322; these read SGHG…YPRY and SSQI…RPPQ. Residues 284–296 are compositionally biased toward polar residues; sequence STTYSSNTGTSAS. Positions 299–313 are enriched in basic and acidic residues; that stretch reads DKFEHYGPIPEEGKH. Residues asparagine 416 and asparagine 424 are each glycosylated (N-linked (GlcNAc...) asparagine). Residues 749 to 769 form a helical membrane-spanning segment; sequence LLFTYFSLANFYLAFYFIAGG. Over 770-786 the chain is Cytoplasmic; the sequence is LADPHVDPFNSDGHVAR. A helical transmembrane segment spans residues 787–807; sequence IIFNILRYVCVLLICTQFILS. Over 808–821 the chain is Extracellular; that stretch reads LGNRPQGAKRMYLA. A helical membrane pass occupies residues 822 to 842; sequence SMIIYAVIMVYTTFATIFIVV. Residues 843–865 lie on the Cytoplasmic side of the membrane; the sequence is RQIQPSQKSDDKPDLELGNNVFT. A helical transmembrane segment spans residues 866 to 886; it reads NLIVSVASTLGLYFVMSFLYL. Topologically, residues 887–894 are extracellular; the sequence is DPWHMFTS. A helical membrane pass occupies residues 895–915; the sequence is AIQYFVLLPSYICTLQIYAFC. The Cytoplasmic portion of the chain corresponds to 916 to 993; it reads NTHDVTWGTK…QDYYKSVRTY (78 aa). Residues 994-1014 traverse the membrane as a helical segment; that stretch reads MVVSWMVANATLAMAVSEAYG. Over 1015–1025 the chain is Extracellular; sequence DSEIGDNFYLR. Residues 1026-1046 form a helical membrane-spanning segment; the sequence is FILWAVAALALFRALGSTTFA. Over 1047–1097 the chain is Cytoplasmic; it reads AINLVSALVEGRVRLRLNMKGFRWIKEKWGDADVKGKFEGLGDRARGLARR.

Belongs to the chitin synthase family.

It is found in the cell membrane. It carries out the reaction [(1-&gt;4)-N-acetyl-beta-D-glucosaminyl](n) + UDP-N-acetyl-alpha-D-glucosamine = [(1-&gt;4)-N-acetyl-beta-D-glucosaminyl](n+1) + UDP + H(+). Functionally, polymerizes chitin, a structural polymer of the cell wall and septum, by transferring the sugar moiety of UDP-GlcNAc to the non-reducing end of the growing chitin polymer. This Neurospora crassa (strain ATCC 24698 / 74-OR23-1A / CBS 708.71 / DSM 1257 / FGSC 987) protein is Chitin synthase 2 (chs-2).